Consider the following 224-residue polypeptide: Phosphoribosylformylglycinamidine synthase subunit PurQ (224 aa).

Positions 2 to 224 (TVAIIRFGGS…DGQGVLEGFR (223 aa)) constitute a Glutamine amidotransferase type-1 domain. Cysteine 85 functions as the Nucleophile in the catalytic mechanism. Active-site residues include histidine 202 and glutamate 204. Residues 204 to 224 (ERASLPDIGPTDGQGVLEGFR) form a disordered region.

Part of the FGAM synthase complex composed of 1 PurL, 1 PurQ and 2 PurS subunits.

Its subcellular location is the cytoplasm. It carries out the reaction N(2)-formyl-N(1)-(5-phospho-beta-D-ribosyl)glycinamide + L-glutamine + ATP + H2O = 2-formamido-N(1)-(5-O-phospho-beta-D-ribosyl)acetamidine + L-glutamate + ADP + phosphate + H(+). The enzyme catalyses L-glutamine + H2O = L-glutamate + NH4(+). It participates in purine metabolism; IMP biosynthesis via de novo pathway; 5-amino-1-(5-phospho-D-ribosyl)imidazole from N(2)-formyl-N(1)-(5-phospho-D-ribosyl)glycinamide: step 1/2. In terms of biological role, part of the phosphoribosylformylglycinamidine synthase complex involved in the purines biosynthetic pathway. Catalyzes the ATP-dependent conversion of formylglycinamide ribonucleotide (FGAR) and glutamine to yield formylglycinamidine ribonucleotide (FGAM) and glutamate. The FGAM synthase complex is composed of three subunits. PurQ produces an ammonia molecule by converting glutamine to glutamate. PurL transfers the ammonia molecule to FGAR to form FGAM in an ATP-dependent manner. PurS interacts with PurQ and PurL and is thought to assist in the transfer of the ammonia molecule from PurQ to PurL. This is Phosphoribosylformylglycinamidine synthase subunit PurQ from Natronomonas pharaonis (strain ATCC 35678 / DSM 2160 / CIP 103997 / JCM 8858 / NBRC 14720 / NCIMB 2260 / Gabara) (Halobacterium pharaonis).